A 264-amino-acid chain; its full sequence is uncharacterized protein (264 aa).

A run of 8 helical transmembrane segments spans residues 19 to 39, 42 to 62, 69 to 89, 100 to 120, 136 to 156, 160 to 180, 192 to 212, and 223 to 243; these read LFPAVIFASLAITQIIPLPFL, YDWLLIICVLMQLWMVRSGLE, VITLFHLIGLALELFKVHMGS, IFGVPLYSGFMYASVASYLCQ, FAVVPLAAAIYLNFFTHHFSI, WWLSGLVIIVFWQTWVTYEVN, FILIGFFIWIAENIATFFGAW, and LVHLGKVSSWLLLVIVSFLIV.

The protein localises to the cell membrane. This is an uncharacterized protein from Bacillus subtilis (strain 168).